Here is a 221-residue protein sequence, read N- to C-terminus: Protein-L-isoaspartate O-methyltransferase (221 aa).

Residue Ser-68 is part of the active site.

The protein belongs to the methyltransferase superfamily. L-isoaspartyl/D-aspartyl protein methyltransferase family.

Its subcellular location is the cytoplasm. The enzyme catalyses [protein]-L-isoaspartate + S-adenosyl-L-methionine = [protein]-L-isoaspartate alpha-methyl ester + S-adenosyl-L-homocysteine. In terms of biological role, catalyzes the methyl esterification of L-isoaspartyl residues in peptides and proteins that result from spontaneous decomposition of normal L-aspartyl and L-asparaginyl residues. It plays a role in the repair and/or degradation of damaged proteins. The protein is Protein-L-isoaspartate O-methyltransferase of Desulfosudis oleivorans (strain DSM 6200 / JCM 39069 / Hxd3) (Desulfococcus oleovorans).